The primary structure comprises 214 residues: Pyrrolidone-carboxylate peptidase (214 aa).

Residues Glu-78, Cys-141, and His-165 contribute to the active site.

This sequence belongs to the peptidase C15 family. As to quaternary structure, homotetramer.

It is found in the cytoplasm. It carries out the reaction Release of an N-terminal pyroglutamyl group from a polypeptide, the second amino acid generally not being Pro.. Its function is as follows. Removes 5-oxoproline from various penultimate amino acid residues except L-proline. The polypeptide is Pyrrolidone-carboxylate peptidase (Streptococcus pneumoniae (strain 70585)).